The following is a 520-amino-acid chain: Putative cytochrome P450 CYP13A4 (520 aa).

C464 contributes to the heme binding site.

Belongs to the cytochrome P450 family. It depends on heme as a cofactor.

Functionally, cytochromes P450 are a group of heme-thiolate monooxygenases. They oxidize a variety of structurally unrelated compounds, including steroids, fatty acids, and xenobiotics. This is Putative cytochrome P450 CYP13A4 (cyp-13A4) from Caenorhabditis elegans.